A 497-amino-acid chain; its full sequence is Glutathione hydrolase 6 (497 aa).

The interval 1–34 (MDATTGPVHYHKLQLWEPGVESEEEEEEEEEEIA) is disordered. The Cytoplasmic portion of the chain corresponds to 1 to 51 (MDATTGPVHYHKLQLWEPGVESEEEEEEEEEEIAEPLVLSLRRLQNTPRNE). A compositionally biased stretch (acidic residues) spans 20-34 (VESEEEEEEEEEEIA). Residues 52–72 (VGGLPGAWARLLAGLLLLAVS) traverse the membrane as a helical; Signal-anchor for type II membrane protein segment. At 73 to 497 (SSLALRQLHS…PSGCCPFQGY (425 aa)) the chain is on the extracellular side. N164, N169, N367, and N378 each carry an N-linked (GlcNAc...) asparagine glycan.

It belongs to the gamma-glutamyltransferase family. As to quaternary structure, heterodimer composed of the light and heavy chains. The active site is located in the light chain. Cleaved by autocatalysis into a large and a small subunit and the autocatalytic cleavage is essential to the functional activation of the enzyme.

It localises to the membrane. The catalysed reaction is an N-terminal (5-L-glutamyl)-[peptide] + an alpha-amino acid = 5-L-glutamyl amino acid + an N-terminal L-alpha-aminoacyl-[peptide]. It catalyses the reaction glutathione + H2O = L-cysteinylglycine + L-glutamate. The enzyme catalyses an S-substituted glutathione + H2O = an S-substituted L-cysteinylglycine + L-glutamate. It participates in sulfur metabolism; glutathione metabolism. Its function is as follows. Hydrolyzes and transfers gamma-glutamyl moieties from glutathione and other gamma-glutamyl compounds to acceptors. The protein is Glutathione hydrolase 6 of Mus musculus (Mouse).